A 608-amino-acid polypeptide reads, in one-letter code: Rap1 GTPase-GDP dissociation stimulator 1 (608 aa).

ARM repeat units follow at residues 89-131 (GLIS…DQAG) and 171-212 (DSLQ…NLAE). The interval 122–171 (EGRSAVDQAGGAQIVVDHLRSLCSKTDPASEKLLTVFCGMLMNYSNEKND) is prevents binding to prenylated RHOA. Residue lysine 231 is modified to N6-acetyllysine. ARM repeat units follow at residues 348 to 391 (DGNC…NLAI), 392 to 432 (PVVN…MLID), and 480 to 520 (SKDV…LIAA).

In terms of assembly, interacts with RABL3. Interacts with RHOT1. As to quaternary structure, interacts with unprenylated RHOA; the interaction is direct. Interacts with RAP1A. Interacts with KRAS. Interacts with RAC1. Interacts with RAP1B. Preferentially interacts with unprenylated GTPases that will become geranylgeranylated. May also interact with prenylated GTPases. Interacts with prenylated RHOA; the interaction is direct and in a 1:1 stoichiometry. Interacts with RAP1A. Interacts with KRAS. Interacts with RAC1. Interacts with RAP1B. Preferentially interacts with prenylated GTPases. In terms of processing, the N-terminus is blocked. Forms covalent cross-links mediated by transglutaminase TGM2, between a glutamine and the epsilon-amino group of a lysine residue, forming homopolymers and heteropolymers. In terms of tissue distribution, brain.

The protein resides in the cytoplasm. It is found in the cytosol. Its subcellular location is the endoplasmic reticulum. The protein localises to the mitochondrion. It localises to the nucleus. Functionally, acts as a GEF (guanine nucleotide exchange factor) for the Rho family of small GTP-binding proteins (G proteins) that stimulates the dissociation of GDP to enable subsequent binding of GTP. Additionally, appears to chaperone the processing and/or trafficking of small GTPases containing a C-terminal polybasic region independently of GEF activity. Targets include RAP1A/RAP1B, RHOA, RHOB, RHOC, RAC1 and KRAS. Regulates mitochondrial dynamics by controlling RHOT function to promote mitochondrial fission during high calcium conditions. Able to promote the Ca(2+) release from the endoplasmic reticulum via both inositol trisphosphate (Ins3P) and ryanodine sensitive receptors leading to a enhanced mitochondrial Ca(2+) uptake. Its function is as follows. Acts as a GEF (guanine nucleotide exchange factor) for unprenylated RHOA. Chaperones the entry and passage of small GTPases through the prenylation pathway. Recognizes the last amino acid in the GTPase C-terminal CAAX motif with a preference for 'Leu' over 'Met', indicating involvement in the geranylgeranylation pathway. May also recognize prenylated GTPases. In terms of biological role, acts as a GEF (guanine nucleotide exchange factor) for prenylated RHOA. Acts as a GEF for RHOC. Chaperones the downstream trafficking and/or processing of small newly prenylated GTPases. Escorts RAC1 to the nucleus. In Bos taurus (Bovine), this protein is Rap1 GTPase-GDP dissociation stimulator 1 (RAP1GDS1).